The primary structure comprises 261 residues: Zinc import ATP-binding protein ZnuC (261 aa).

The ABC transporter domain occupies 6–227 (IQLNNIHLRF…PEYLKLFGKQ (222 aa)). An ATP-binding site is contributed by 38–45 (GPNGAGKS).

Belongs to the ABC transporter superfamily. Zinc importer (TC 3.A.1.15.5) family. In terms of assembly, the complex is composed of two ATP-binding proteins (ZnuC), two transmembrane proteins (ZnuB) and a solute-binding protein (ZnuA).

It is found in the cell inner membrane. It catalyses the reaction Zn(2+)(out) + ATP(in) + H2O(in) = Zn(2+)(in) + ADP(in) + phosphate(in) + H(+)(in). In terms of biological role, part of the ABC transporter complex ZnuABC involved in zinc import. Responsible for energy coupling to the transport system. This is Zinc import ATP-binding protein ZnuC from Saccharophagus degradans (strain 2-40 / ATCC 43961 / DSM 17024).